Reading from the N-terminus, the 335-residue chain is NADH-quinone oxidoreductase subunit H (335 aa).

Helical transmembrane passes span 11–31 (VILT…CGAL), 81–101 (MIFT…FVVI), 114–134 (IGLL…LFAG), 154–174 (VSYE…VGSF), 187–207 (LWFI…GVAV), 238–258 (FFVG…TLFF), 270–290 (QVPF…FILL), and 307–327 (WKFC…VVLY).

Belongs to the complex I subunit 1 family. NDH-1 is composed of 13 different subunits. Subunits NuoA, H, J, K, L, M, N constitute the membrane sector of the complex.

Its subcellular location is the cell inner membrane. It carries out the reaction a quinone + NADH + 5 H(+)(in) = a quinol + NAD(+) + 4 H(+)(out). NDH-1 shuttles electrons from NADH, via FMN and iron-sulfur (Fe-S) centers, to quinones in the respiratory chain. The immediate electron acceptor for the enzyme in this species is believed to be ubiquinone. Couples the redox reaction to proton translocation (for every two electrons transferred, four hydrogen ions are translocated across the cytoplasmic membrane), and thus conserves the redox energy in a proton gradient. This subunit may bind ubiquinone. The polypeptide is NADH-quinone oxidoreductase subunit H (Pseudomonas entomophila (strain L48)).